Reading from the N-terminus, the 226-residue chain is PKHD-type hydroxylase Sde_2812 (226 aa).

The region spanning 78–178 is the Fe2OG dioxygenase domain; the sequence is KIFPPLFNCY…RLASFFWLQS (101 aa). Fe cation contacts are provided by H96, D98, and H159. R169 contacts 2-oxoglutarate.

It depends on Fe(2+) as a cofactor. L-ascorbate is required as a cofactor.

This is PKHD-type hydroxylase Sde_2812 from Saccharophagus degradans (strain 2-40 / ATCC 43961 / DSM 17024).